The sequence spans 589 residues: MGSRRITLLGALFAVLAVAIEGRTLLTHNLKAEAAETVDAVSSVVAGSAGRQLLVSEPHDYNYEKVGFDWTGGVCVNTGTSKQSPINIETDSLAEESERLGTADDTSRLALKGLLSSSYQLTSEVAINLEQDMQFSFNAPDEDLPQLTIGGVVHTFKPVQIHFHHFASEHAIDGQLYPLEAHMVMASQNDGSDQLAVIGIMYKYGEEDPFLKRLQETAQSNGEAGDKNVELNSFSINVARDLLPESDLTYYGYDGSLTTPGCDERVKWHVFKEARTVSVAQLKVFSEVTLAAHPEATVTNNRVIQPLNGRKVYEYKGEPNDKYNYVQHGFDWRDNGLDSCAGDVQSPIDIVTSTLQAGSSRSDVSSVNLMTLNTDAFTLTGNTVNIGQGMQINFGDPPAGDLPVIRIGTRDVTFRPLQVHWHFFLSEHTVDGVHYPLEAHIVMKDNDNLGDSAGQLAVIGIMYKYGDADPFITDMQKRVSDKIASGAITYGQSGVSLNNPDDPFNVNIKNNFLPSELGYAGYDGSLTTPPCSEIVKWHVFLEPRTVSVEQMEVFADVTLNSNPGATVTTNRMIQPLEGRTVYGYNGAAA.

2 Alpha-carbonic anhydrase domains span residues 59-316 (HDYN…YEYK) and 321-585 (DKYN…YGYN). 258-259 (TT) provides a ligand contact to substrate. The catalytic stretch occupies residues 390–589 (MQINFGDPPA…TVYGYNGAAA (200 aa)). Zn(2+)-binding residues include H420, H422, and H440.

It belongs to the alpha-carbonic anhydrase family. Requires Zn(2+) as cofactor.

The enzyme catalyses hydrogencarbonate + H(+) = CO2 + H2O. Functionally, reversible hydration of carbon dioxide. The chain is Carbonic anhydrase (DCA) from Dunaliella salina (Green alga).